An 81-amino-acid chain; its full sequence is ATP synthase subunit c (81 aa).

2 helical membrane passes run 7-27 and 57-77; these read AASVVAAGLAVGLGAIGPGLG and FAFMESLTIYGLVVALVLLFA.

This sequence belongs to the ATPase C chain family. In terms of assembly, F-type ATPases have 2 components, F(1) - the catalytic core - and F(0) - the membrane proton channel. F(1) has five subunits: alpha(3), beta(3), gamma(1), delta(1), epsilon(1). F(0) has four main subunits: a(1), b(1), b'(1) and c(10-14). The alpha and beta chains form an alternating ring which encloses part of the gamma chain. F(1) is attached to F(0) by a central stalk formed by the gamma and epsilon chains, while a peripheral stalk is formed by the delta, b and b' chains.

Its subcellular location is the cellular thylakoid membrane. Its function is as follows. F(1)F(0) ATP synthase produces ATP from ADP in the presence of a proton or sodium gradient. F-type ATPases consist of two structural domains, F(1) containing the extramembraneous catalytic core and F(0) containing the membrane proton channel, linked together by a central stalk and a peripheral stalk. During catalysis, ATP synthesis in the catalytic domain of F(1) is coupled via a rotary mechanism of the central stalk subunits to proton translocation. Functionally, key component of the F(0) channel; it plays a direct role in translocation across the membrane. A homomeric c-ring of between 10-14 subunits forms the central stalk rotor element with the F(1) delta and epsilon subunits. This chain is ATP synthase subunit c, found in Prochlorococcus marinus (strain MIT 9301).